The sequence spans 860 residues: SH2 domain-containing protein 3C (860 aa).

Phosphoserine is present on S22. 2 disordered regions span residues 51–117 (EATQ…PPGL) and 130–180 (PLED…PEAG). Over residues 162 to 175 (ERPPRDVHSERAAG) the composition is skewed to basic and acidic residues. One can recognise an SH2 domain in the interval 220-319 (WYHGRIPREV…QSGAIIYCPV (100 aa)). 2 positions are modified to phosphotyrosine: Y278 and Y283. Residues 335 to 537 (GQGSSKPASP…LSENGAPEGD (203 aa)) form a disordered region. A Phosphoserine modification is found at S359. Composition is skewed to low complexity over residues 405–420 (SPMS…PAYS), 427–443 (AAPA…SPVA), and 479–490 (SPSPSLSSYSDP). Position 440 is a phosphoserine (S440). Positions 586 to 854 (DARTLARHVT…TALSHKLEPA (269 aa)) constitute a Ras-GEF domain. Y793 bears the Phosphotyrosine mark.

As to quaternary structure, component of a complex comprised of SH2D3C, BCAR1/CAS, and CRK. Within the complex, interacts with CRK and (via C-terminus) with BCAR1/CAS (via C-terminus). Interacts with NEDD9/HEF1. Interacts with EPHB2. In terms of assembly, interacts with NEDD9/HEF1. Interacts with BCAR1/CAS. Interacts with PTK2B. Interacts (via C-terminus) with BCAR1/CAS (via C-terminus). Interacts with IGF1. Post-translationally, phosphorylated by MAPK/ERK upon T-cell receptor stimulation in T-cells. In terms of tissue distribution, ubiquitously expressed.

The protein localises to the cytoplasm. The protein resides in the cell membrane. It localises to the cell projection. It is found in the axon. Its subcellular location is the ruffle membrane. Acts as an adapter protein that mediates cell signaling pathways involved in cellular functions such as cell adhesion and migration, tissue organization, and the regulation of the immune response. Plays a role in integrin-mediated cell adhesion through BCAR1-CRK-RAPGEF1 signaling and activation of the small GTPase RAP1. Promotes cell migration and invasion through the extracellular matrix. Required for marginal zone B-cell development and thymus-independent type 2 immune responses. Mediates migration and adhesion of B cells in the splenic marginal zone via promoting hyperphosphorylation of NEDD9/CASL. Plays a role in CXCL13-induced chemotaxis of B-cells. Plays a role in the migration of olfactory sensory neurons (OSNs) into the forebrain and the innervation of the olfactory bulb by the OSN axons during development. Required for the efficient tyrosine phosphorylation of BCAR1 in OSN axons. In terms of biological role, important regulator of chemokine-induced, integrin-mediated T lymphocyte adhesion and migration, acting upstream of RAP1. Required for tissue-specific adhesion of T lymphocytes to peripheral tissues. Required for basal and CXCL2 stimulated serine-threonine phosphorylation of NEDD9. May be involved in the regulation of T-cell receptor-mediated IL2 production through the activation of the JNK pathway in T-cells. Functionally, may be involved in the BCAR1/CAS-mediated JNK activation pathway. This is SH2 domain-containing protein 3C (SH2D3C) from Homo sapiens (Human).